We begin with the raw amino-acid sequence, 1906 residues long: Myosin light chain kinase, smooth muscle (1906 aa).

Ig-like C2-type domains are found at residues 28-117 (PAFT…VELT) and 156-244 (PKFA…AELT). 2 disordered regions span residues 127-157 (SLPS…SPPK) and 309-453 (ETFY…SKVS). A compositionally biased stretch (basic and acidic residues) spans 309 to 321 (ETFYTSREAKDGK). Polar residues-rich tracts occupy residues 345-354 (LQKTSSTITL) and 384-402 (PLMT…QVSP). Residues 403–424 (RSRETENRAGVRKSVKEEKREP) are compositionally biased toward basic and acidic residues. Ig-like C2-type domains lie at 429-517 (PQFE…WLLT), 521-613 (PKVE…AQVT), 637-725 (PIFL…ATLT), and 735-830 (PWFI…SSAS). The IIA-1 repeat unit spans residues 660–676 (VSANPCPEIIWLHNGKE). The interval 660 to 1833 (VSANPCPEII…EVMWYKDDQP (1174 aa)) is 4 X repeats, motif IIA. The stretch at 693-708 (SLYIQEVFPEDTGKYT) is one IIB-1 repeat. Residues 693–1866 (SLYIQEVFPE…VCGDDDAKYT (1174 aa)) are 5 X repeats, motif IIB. An IIA-2 repeat occupies 758 to 774 (IAGDPFPTVHWFKDGQE). One copy of the IIB-2 repeat lies at 791-807 (TLILRNVQSRHAGQYEI). Disordered stretches follow at residues 831-881 (RAEM…QEDV) and 947-1086 (PKTL…APSF). Basic and acidic residues-rich tracts occupy residues 833-850 (EMLR…RRDG) and 867-881 (SSSE…QEDV). Residues 970-987 (AKKGTPKTPLPEKVPPPK) form an III-1 repeat. The interval 970-1226 (AKKGTPKTPL…TPPKAATPPQ (257 aa)) is 4 X repeats, motif III. A compositionally biased stretch (pro residues) spans 977 to 988 (TPLPEKVPPPKP). The III-2 repeat unit spans residues 999–1016 (AKKKPPAENGSASTPAPN). Residues 1039-1051 (VKKEEKNDRKCEH) are compositionally biased toward basic and acidic residues. An III-3 repeat occupies 1061–1078 (IGKKAENKPAASKPTPPP). Ig-like C2-type domains follow at residues 1084–1172 (PSFT…CKVL) and 1225–1313 (PQIT…VNLT). One copy of the IIA-3 repeat lies at 1107 to 1123 (ISSDPPASVSWTLDSKA). The IIB-3 repeat unit spans residues 1140–1156 (SLTIEKVMPEDGGEYKC). The tract at residues 1180–1227 (KAAKPAEKKTKKPKTTLPPVLSTESSEATVKKKPAPKTPPKAATPPQI) is disordered. One copy of the III-4 repeat lies at 1209–1226 (VKKKPAPKTPPKAATPPQ). One copy of the IIB-4 repeat lies at 1281–1297 (KLTISSTKQEHCGCYTL). A motif IA region spans residues 1317-1364 (KPDPPAGTPCASDIRSSSLTLSWYGSSYDGGSAVQSYTVEIWNSVDNK). Residues 1321–1414 (PAGTPCASDI…ESEVVKVGEK (94 aa)) form the Fibronectin type-III domain. A motif IB region spans residues 1385–1402 (REYKFRVRAANVYGISEP). Residues 1414–1433 (KQEEELKEEEAELSDDEGKE) are disordered. Residues 1415–1432 (QEEELKEEEAELSDDEGK) are compositionally biased toward acidic residues. The Protein kinase domain maps to 1453–1708 (YNIEERLGSG…CTQCLQHPWL (256 aa)). ATP contacts are provided by residues 1459 to 1467 (LGSGKFGQV) and lysine 1482. The active-site Proton acceptor is the aspartate 1574. Residues 1700-1763 (TQCLQHPWLQ…SGMSGRKASG (64 aa)) are calmodulin-binding. A calmodulin autoinhibition (AM13) region region spans residues 1716–1728 (EAKKLSKDRMKKY). Residues 1730-1749 (ARRKWQKTGHAVRAIGRLSS) form a calmodulin recognition (RS20) region region. Serine 1762 bears the Phosphoserine; by PKG mark. Serine 1768 is modified (phosphoserine; by MAPK). Residues 1794-1885 (PYFTKTILDM…ATCTAELLVE (92 aa)) enclose the Ig-like C2-type 9 domain. An IIA-4 repeat occupies 1817–1833 (IEGYPDPEVMWYKDDQP). An IIB-5 repeat occupies 1851 to 1866 (SLTISEVCGDDDAKYT). A disordered region spans residues 1885-1906 (ETMGKEGEGEGEGEEDEEEEEE). The segment covering 1893-1906 (GEGEGEEDEEEEEE) has biased composition (acidic residues).

This sequence belongs to the protein kinase superfamily. CAMK Ser/Thr protein kinase family. In terms of assembly, all isoforms including Telokin bind calmodulin. Mg(2+) is required as a cofactor. It depends on Ca(2+) as a cofactor. The C-terminus is deglutamylated, leading to the formation of Myosin light chain kinase, smooth muscle, deglutamylated form. The C-terminus is variable, with one to five C-terminal glutamyl residues being removed producing five forms differring in their number of C-terminal glutamyl residues. In terms of processing, acetylated. Post-translationally, phosphorylation of telokin by PKG has no significant effect on its myosin binding activity, but promotes translocation to the membrane. Isoform telokin is expressed in gizzard, heart, lung, intestine, and skeletal muscle although the levels of the expression in the latter were much less than that in the gizzard.

The protein localises to the cytoplasm. The protein resides in the cytosol. It is found in the membrane. It carries out the reaction L-seryl-[myosin light chain] + ATP = O-phospho-L-seryl-[myosin light chain] + ADP + H(+). The catalysed reaction is L-threonyl-[myosin light chain] + ATP = O-phospho-L-threonyl-[myosin light chain] + ADP + H(+). Its activity is regulated as follows. Activated by phosphorylation on Tyr-478. Isoforms which lack this tyrosine residue are not regulated in this way. All catalytically active isoforms require binding to calcium and calmodulin for activation. Phosphorylates a specific serine in the N-terminus of a myosin light chain, which leads to the formation of calmodulin/MLCK signal transduction complexes which allow selective transduction of calcium signals. The polypeptide is Myosin light chain kinase, smooth muscle (Mylk) (Gallus gallus (Chicken)).